The primary structure comprises 110 residues: Senescence associated gene 20 (110 aa).

The polypeptide is Senescence associated gene 20 (Arabidopsis thaliana (Mouse-ear cress)).